The chain runs to 331 residues: Ketol-acid reductoisomerase (NADP(+)) (331 aa).

A KARI N-terminal Rossmann domain is found at 2–182 (ARMYYDSDAN…GGTRAGILET (181 aa)). NADP(+)-binding positions include 25–28 (YGSQ), Ser-51, Ser-53, and 83–86 (DEVQ). The active site involves His-108. Gly-134 provides a ligand contact to NADP(+). Residues 183 to 328 (TFREETETDL…KDLRAMFSWL (146 aa)) form the KARI C-terminal knotted domain. Mg(2+)-binding residues include Asp-191, Glu-195, Glu-227, and Glu-231. Ser-252 provides a ligand contact to substrate.

This sequence belongs to the ketol-acid reductoisomerase family. Requires Mg(2+) as cofactor.

It catalyses the reaction (2R)-2,3-dihydroxy-3-methylbutanoate + NADP(+) = (2S)-2-acetolactate + NADPH + H(+). The catalysed reaction is (2R,3R)-2,3-dihydroxy-3-methylpentanoate + NADP(+) = (S)-2-ethyl-2-hydroxy-3-oxobutanoate + NADPH + H(+). It functions in the pathway amino-acid biosynthesis; L-isoleucine biosynthesis; L-isoleucine from 2-oxobutanoate: step 2/4. The protein operates within amino-acid biosynthesis; L-valine biosynthesis; L-valine from pyruvate: step 2/4. Its function is as follows. Involved in the biosynthesis of branched-chain amino acids (BCAA). Catalyzes an alkyl-migration followed by a ketol-acid reduction of (S)-2-acetolactate (S2AL) to yield (R)-2,3-dihydroxy-isovalerate. In the isomerase reaction, S2AL is rearranged via a Mg-dependent methyl migration to produce 3-hydroxy-3-methyl-2-ketobutyrate (HMKB). In the reductase reaction, this 2-ketoacid undergoes a metal-dependent reduction by NADPH to yield (R)-2,3-dihydroxy-isovalerate. The sequence is that of Ketol-acid reductoisomerase (NADP(+)) from Trichodesmium erythraeum (strain IMS101).